A 161-amino-acid polypeptide reads, in one-letter code: SsrA-binding protein (161 aa).

It belongs to the SmpB family.

It localises to the cytoplasm. Functionally, required for rescue of stalled ribosomes mediated by trans-translation. Binds to transfer-messenger RNA (tmRNA), required for stable association of tmRNA with ribosomes. tmRNA and SmpB together mimic tRNA shape, replacing the anticodon stem-loop with SmpB. tmRNA is encoded by the ssrA gene; the 2 termini fold to resemble tRNA(Ala) and it encodes a 'tag peptide', a short internal open reading frame. During trans-translation Ala-aminoacylated tmRNA acts like a tRNA, entering the A-site of stalled ribosomes, displacing the stalled mRNA. The ribosome then switches to translate the ORF on the tmRNA; the nascent peptide is terminated with the 'tag peptide' encoded by the tmRNA and targeted for degradation. The ribosome is freed to recommence translation, which seems to be the essential function of trans-translation. The protein is SsrA-binding protein of Vesicomyosocius okutanii subsp. Calyptogena okutanii (strain HA).